We begin with the raw amino-acid sequence, 200 residues long: Signal peptidase complex catalytic subunit SEC11 (200 aa).

At 1-15 (MFAELAPYLSNPRQT) the chain is on the cytoplasmic side. A helical; Signal-anchor for type II membrane protein transmembrane segment spans residues 16 to 33 (LAQILNFALVLSTAFMGW). The Lumenal segment spans residues 34–200 (KALSVYTNSS…MGVMVMLQRE (167 aa)). N-linked (GlcNAc...) asparagine glycosylation occurs at Asn41. Catalysis depends on charge relay system residues Ser53 and His92. The segment at 101 to 131 (GDGGKKSQRRLEKEADKRSGPGLSSPISHQM) is disordered. A compositionally biased stretch (basic and acidic residues) spans 103-119 (GGKKSQRRLEKEADKRS). Asp142 acts as the Charge relay system in catalysis. The tract at residues 186–197 (VLLGIMGVMVML) is C-terminal short (CTS) helix.

The protein belongs to the peptidase S26B family. Component of the signal peptidase complex (SPC) composed of a catalytic subunit SEC11 and three accessory subunits SPC1, SPC2 and SPC3. The complex induces a local thinning of the ER membrane which is used to measure the length of the signal peptide (SP) h-region of protein substrates. This ensures the selectivity of the complex towards h-regions shorter than 18-20 amino acids. SPC associates with the translocon complex.

It localises to the endoplasmic reticulum membrane. The enzyme catalyses Cleavage of hydrophobic, N-terminal signal or leader sequences from secreted and periplasmic proteins.. Its function is as follows. Catalytic component of the signal peptidase complex (SPC) which catalyzes the cleavage of N-terminal signal sequences from nascent proteins as they are translocated into the lumen of the endoplasmic reticulum. Specifically cleaves N-terminal signal peptides that contain a hydrophobic alpha-helix (h-region) shorter than 18-20 amino acids. This chain is Signal peptidase complex catalytic subunit SEC11 (SEC11), found in Arthroderma gypseum (strain ATCC MYA-4604 / CBS 118893) (Microsporum gypseum).